A 169-amino-acid chain; its full sequence is MERAIFAGGCFWCMVQPFEEQAGILSVRSGYTGGHLPNPSYEQVCAKTTGHTEAVEIIFDPEEISYKELVELYWVQTDPTDAFGQFEDRGDNYRPVIYYTTERQKEIAEQSKANLQASGRFDQPIVTTIEPAEPFYLAEDYHQGFYKKNPKRYAQSSAIRHQFLEENWS.

Cys-10 is an active-site residue.

The protein belongs to the MsrA Met sulfoxide reductase family.

It catalyses the reaction L-methionyl-[protein] + [thioredoxin]-disulfide + H2O = L-methionyl-(S)-S-oxide-[protein] + [thioredoxin]-dithiol. The catalysed reaction is [thioredoxin]-disulfide + L-methionine + H2O = L-methionine (S)-S-oxide + [thioredoxin]-dithiol. Has an important function as a repair enzyme for proteins that have been inactivated by oxidation. Catalyzes the reversible oxidation-reduction of methionine sulfoxide in proteins to methionine. This is Peptide methionine sulfoxide reductase MsrA from Streptococcus pyogenes serotype M3 (strain ATCC BAA-595 / MGAS315).